Reading from the N-terminus, the 109-residue chain is Phosphocarrier protein HPr (109 aa).

The HPr domain maps to 22 to 109; sequence ELSAVFTIRN…EVFNSGFGEL (88 aa). Catalysis depends on histidine 36, which acts as the Pros-phosphohistidine intermediate.

Belongs to the HPr family.

Its subcellular location is the cytoplasm. General (non sugar-specific) component of the phosphoenolpyruvate-dependent sugar phosphotransferase system (sugar PTS). This major carbohydrate active-transport system catalyzes the phosphorylation of incoming sugar substrates concomitantly with their translocation across the cell membrane. The phosphoryl group from phosphoenolpyruvate (PEP) is transferred to the phosphoryl carrier protein HPr by enzyme I. Phospho-HPr then transfers it to the PTS EIIA domain. This is Phosphocarrier protein HPr (ptsH) from Chlamydia trachomatis serovar D (strain ATCC VR-885 / DSM 19411 / UW-3/Cx).